Reading from the N-terminus, the 353-residue chain is Putative 3-oxoacyl-[acyl-carrier-protein] synthase 3 (353 aa).

Catalysis depends on residues C122, H268, and N299.

This sequence belongs to the thiolase-like superfamily. FabH family. Homodimer.

It is found in the cytoplasm. It carries out the reaction malonyl-[ACP] + acetyl-CoA + H(+) = 3-oxobutanoyl-[ACP] + CO2 + CoA. Its pathway is lipid metabolism; fatty acid biosynthesis. Functionally, may catalyze the condensation reaction of fatty acid synthesis by the addition to an acyl acceptor of two carbons from malonyl-ACP. The protein is Putative 3-oxoacyl-[acyl-carrier-protein] synthase 3 of Campylobacter jejuni subsp. jejuni serotype O:2 (strain ATCC 700819 / NCTC 11168).